A 196-amino-acid polypeptide reads, in one-letter code: Large ribosomal subunit protein eL15 (196 aa).

Residues 154-196 (PGHRGRSERGLTSAGVKGRGMRRRGKGTEKCRPSVRANANRAK) are disordered.

This sequence belongs to the eukaryotic ribosomal protein eL15 family.

The chain is Large ribosomal subunit protein eL15 from Methanospirillum hungatei JF-1 (strain ATCC 27890 / DSM 864 / NBRC 100397 / JF-1).